We begin with the raw amino-acid sequence, 244 residues long: 5-oxoprolinase subunit A (244 aa).

It belongs to the LamB/PxpA family. As to quaternary structure, forms a complex composed of PxpA, PxpB and PxpC.

The enzyme catalyses 5-oxo-L-proline + ATP + 2 H2O = L-glutamate + ADP + phosphate + H(+). Catalyzes the cleavage of 5-oxoproline to form L-glutamate coupled to the hydrolysis of ATP to ADP and inorganic phosphate. This Salmonella arizonae (strain ATCC BAA-731 / CDC346-86 / RSK2980) protein is 5-oxoprolinase subunit A.